A 535-amino-acid polypeptide reads, in one-letter code: Cytochrome c oxidase subunit 1 (535 aa).

A helical transmembrane segment spans residues 17 to 37; that stretch reads ILYFIFAIFSGVIGSTMSLII. 3 residues coordinate Ca(2+): glutamate 40, alanine 43, and glycine 45. Transmembrane regions (helical) follow at residues 58 to 78, 104 to 124, 147 to 167, 184 to 204, 236 to 256, and 268 to 288; these read VLVV…GLVG, FWLL…ESWA, LGIF…INFI, PLFV…LPVL, LFWF…FGII, and VFGE…GFLV. Histidine 63 contributes to the Fe(II)-heme a binding site. Histidine 242 serves as a coordination point for Cu cation. The 1'-histidyl-3'-tyrosine (His-Tyr) cross-link spans 242–246; sequence HPEVY. Residue tyrosine 246 participates in O2 binding. Cu cation-binding residues include histidine 291 and histidine 292. The next 2 membrane-spanning stretches (helical) occupy residues 311–331 and 339–359; these read MVIA…LYGG and MLYA…GVAL. 2 residues coordinate Mg(2+): histidine 369 and aspartate 370. 2 helical membrane-spanning segments follow: residues 373–393 and 413–433; these read YVVG…LFAG and IQFW…HFLG. Histidine 377 contributes to the heme a3 binding site. Histidine 379 serves as a coordination point for Fe(II)-heme a. Position 442 (proline 442) interacts with Ca(2+). A helical membrane pass occupies residues 453–473; it reads YVSSIGSVIAIISLALFIYII.

The protein belongs to the heme-copper respiratory oxidase family. As to quaternary structure, component of the cytochrome c oxidase (complex IV, CIV), a multisubunit enzyme composed of a catalytic core of 3 subunits and several supernumerary subunits. The complex exists as a monomer or a dimer and forms supercomplexes (SCs) in the inner mitochondrial membrane with ubiquinol-cytochrome c oxidoreductase (cytochrome b-c1 complex, complex III, CIII). The cofactor is heme. Cu cation serves as cofactor.

The protein localises to the mitochondrion inner membrane. The catalysed reaction is 4 Fe(II)-[cytochrome c] + O2 + 8 H(+)(in) = 4 Fe(III)-[cytochrome c] + 2 H2O + 4 H(+)(out). The protein operates within energy metabolism; oxidative phosphorylation. Its function is as follows. Component of the cytochrome c oxidase, the last enzyme in the mitochondrial electron transport chain which drives oxidative phosphorylation. The respiratory chain contains 3 multisubunit complexes succinate dehydrogenase (complex II, CII), ubiquinol-cytochrome c oxidoreductase (cytochrome b-c1 complex, complex III, CIII) and cytochrome c oxidase (complex IV, CIV), that cooperate to transfer electrons derived from NADH and succinate to molecular oxygen, creating an electrochemical gradient over the inner membrane that drives transmembrane transport and the ATP synthase. Cytochrome c oxidase is the component of the respiratory chain that catalyzes the reduction of oxygen to water. Electrons originating from reduced cytochrome c in the intermembrane space (IMS) are transferred via the dinuclear copper A center (CU(A)) of subunit 2 and heme A of subunit 1 to the active site in subunit 1, a binuclear center (BNC) formed by heme A3 and copper B (CU(B)). The BNC reduces molecular oxygen to 2 water molecules using 4 electrons from cytochrome c in the IMS and 4 protons from the mitochondrial matrix. The chain is Cytochrome c oxidase subunit 1 (COX1) from Wickerhamomyces canadensis (Yeast).